The sequence spans 352 residues: Long-chain-alcohol O-fatty-acyltransferase (352 aa).

Helical transmembrane passes span 13-33 (VWIS…VAPH), 34-54 (GGAL…FLPL), 67-87 (LYLV…LGPL), 128-148 (KVVL…IYEF), 155-175 (FVIS…TLAA), 239-259 (VAGA…VFFF), 267-287 (SWEV…EMVV), and 303-323 (GALT…PQLV).

The protein belongs to the wax synthase family.

It is found in the microsome membrane. The catalysed reaction is a long chain fatty alcohol + a fatty acyl-CoA = a wax ester + CoA. Catalyzes the final step in the synthesis of long-chain linear esters (waxes). Has activity with both saturated and monounsaturated acyl-CoA ranging from 14 to 24 carbons in length, but C20:1 acyl-CoA is the preferred substrate. The polypeptide is Long-chain-alcohol O-fatty-acyltransferase (Simmondsia chinensis (Jojoba)).